A 2298-amino-acid polypeptide reads, in one-letter code: Protein Ycf2 (2298 aa).

Position 1637 to 1644 (1637 to 1644) interacts with ATP; it reads GSIGTGRS.

Belongs to the Ycf2 family.

It is found in the plastid. The protein resides in the chloroplast stroma. In terms of biological role, probable ATPase of unknown function. Its presence in a non-photosynthetic plant (Epifagus virginiana) and experiments in tobacco indicate that it has an essential function which is probably not related to photosynthesis. The chain is Protein Ycf2 from Lotus japonicus (Lotus corniculatus var. japonicus).